The chain runs to 229 residues: Large ribosomal subunit protein uL1 (229 aa).

It belongs to the universal ribosomal protein uL1 family. As to quaternary structure, part of the 50S ribosomal subunit.

Its function is as follows. Binds directly to 23S rRNA. The L1 stalk is quite mobile in the ribosome, and is involved in E site tRNA release. In terms of biological role, protein L1 is also a translational repressor protein, it controls the translation of the L11 operon by binding to its mRNA. The sequence is that of Large ribosomal subunit protein uL1 from Clostridium botulinum (strain 657 / Type Ba4).